The following is a 248-amino-acid chain: 2,3-bisphosphoglycerate-dependent phosphoglycerate mutase (248 aa).

Substrate-binding positions include 10–17 (RHGQSEWN), 23–24 (TG), Arg-62, 89–92 (ERHY), Lys-100, 116–117 (RR), and 183–184 (GN). Residue His-11 is the Tele-phosphohistidine intermediate of the active site. Residue Glu-89 is the Proton donor/acceptor of the active site.

It belongs to the phosphoglycerate mutase family. BPG-dependent PGAM subfamily.

The catalysed reaction is (2R)-2-phosphoglycerate = (2R)-3-phosphoglycerate. Its pathway is carbohydrate degradation; glycolysis; pyruvate from D-glyceraldehyde 3-phosphate: step 3/5. In terms of biological role, catalyzes the interconversion of 2-phosphoglycerate and 3-phosphoglycerate. This Corynebacterium glutamicum (strain ATCC 13032 / DSM 20300 / JCM 1318 / BCRC 11384 / CCUG 27702 / LMG 3730 / NBRC 12168 / NCIMB 10025 / NRRL B-2784 / 534) protein is 2,3-bisphosphoglycerate-dependent phosphoglycerate mutase.